A 163-amino-acid polypeptide reads, in one-letter code: Nucleotide-binding protein Tery_2743 (163 aa).

Belongs to the YajQ family.

Nucleotide-binding protein. The sequence is that of Nucleotide-binding protein Tery_2743 from Trichodesmium erythraeum (strain IMS101).